The sequence spans 275 residues: NH(3)-dependent NAD(+) synthetase (275 aa).

46-53 is a binding site for ATP; the sequence is GISGGQDS. Aspartate 52 contributes to the Mg(2+) binding site. Residue arginine 140 participates in deamido-NAD(+) binding. An ATP-binding site is contributed by threonine 160. Glutamate 165 is a binding site for Mg(2+). Deamido-NAD(+) is bound by residues lysine 173 and aspartate 180. Residues lysine 189 and threonine 211 each coordinate ATP. 260 to 261 serves as a coordination point for deamido-NAD(+); it reads HK.

Belongs to the NAD synthetase family. Homodimer.

It carries out the reaction deamido-NAD(+) + NH4(+) + ATP = AMP + diphosphate + NAD(+) + H(+). The protein operates within cofactor biosynthesis; NAD(+) biosynthesis; NAD(+) from deamido-NAD(+) (ammonia route): step 1/1. Its function is as follows. Catalyzes the ATP-dependent amidation of deamido-NAD to form NAD. Uses ammonia as a nitrogen source. In Salmonella enteritidis PT4 (strain P125109), this protein is NH(3)-dependent NAD(+) synthetase.